The primary structure comprises 446 residues: ATP-dependent protease ATPase subunit HslU (446 aa).

Residues Ile-18, 60 to 65 (GVGKTE), Asp-259, Glu-324, and Arg-396 each bind ATP.

The protein belongs to the ClpX chaperone family. HslU subfamily. A double ring-shaped homohexamer of HslV is capped on each side by a ring-shaped HslU homohexamer. The assembly of the HslU/HslV complex is dependent on binding of ATP.

It is found in the cytoplasm. ATPase subunit of a proteasome-like degradation complex; this subunit has chaperone activity. The binding of ATP and its subsequent hydrolysis by HslU are essential for unfolding of protein substrates subsequently hydrolyzed by HslV. HslU recognizes the N-terminal part of its protein substrates and unfolds these before they are guided to HslV for hydrolysis. The polypeptide is ATP-dependent protease ATPase subunit HslU (Baumannia cicadellinicola subsp. Homalodisca coagulata).